Reading from the N-terminus, the 423-residue chain is Histone deacetylase 14, chloroplastic (423 aa).

The transit peptide at M1–C44 directs the protein to the chloroplast. Residues D62–L392 are histone deacetylase. H202 functions as the Proton donor/acceptor in the catalytic mechanism. Zn(2+)-binding residues include D239, H241, and D326.

This sequence belongs to the histone deacetylase family. In terms of assembly, interacts with PP2A2. Requires Zn(2+) as cofactor. Expressed in stems, leaves, flowers, siliques and mature seeds.

The protein resides in the nucleus. It localises to the cytoplasm. It is found in the plastid. Its subcellular location is the chloroplast stroma. The protein localises to the mitochondrion. The catalysed reaction is N-acetylserotonin + H2O = serotonin + acetate. The enzyme catalyses N-acetyltyramine + H2O = tyramine + acetate. It carries out the reaction N-acetyltryptamine + H2O = tryptamine + acetate. It catalyses the reaction melatonin + H2O = 5-methoxytryptamine + acetate. With respect to regulation, its activity is inhibited by trichostatin A (TSA), a known histone deacetylase inhibitor. Regulates lysine acetylation levels of plastid proteins related to photosynthesis. Involved in the regulation of the activation state of RuBisCO, which is controlled by lysine acetylation of RuBisCO activase under low-light conditions. Associates with alpha- and beta-tubulins and deacetylate alpha-tubulin. Does not seem to be required for the cellular patterning in the root epidermis. Involved in the regulation of melatonin biosynthesis by catalyzing the deacetylation of N-acetylserotonin to produce serotonin. N-acetylserotonin is methylated by acetylserotonin O-methyltransferase (ASMT) to produce melatonin (N-acetyl-5-methoxytryptamine). Deacetylates melatonin to produce 5-methoxytryptamine. In vitro, deacetylates N-acetyltyramine and N-acetyltryptamine to produce tyramine and tryptamine, respectively. The protein is Histone deacetylase 14, chloroplastic of Arabidopsis thaliana (Mouse-ear cress).